Consider the following 102-residue polypeptide: ATP-dependent Clp protease adapter protein ClpS (102 aa).

This sequence belongs to the ClpS family. In terms of assembly, binds to the N-terminal domain of the chaperone ClpA.

In terms of biological role, involved in the modulation of the specificity of the ClpAP-mediated ATP-dependent protein degradation. This Janthinobacterium sp. (strain Marseille) (Minibacterium massiliensis) protein is ATP-dependent Clp protease adapter protein ClpS.